Consider the following 367-residue polypeptide: Carbohydrate sulfotransferase 14 (367 aa).

Over 1–34 (MPPRKKEYGIKRASGSLVHFRAPVSATTIRRHSA) the chain is Cytoplasmic. Residues 35 to 55 (VVPSVLTFAVIVASGGLLLMI) traverse the membrane as a helical; Signal-anchor for type II membrane protein segment. Residues 56–367 (EKGMLNSVQT…PNTTTEYCRH (312 aa)) lie on the Lumenal side of the membrane. Asn-99 is a glycosylation site (N-linked (GlcNAc...) asparagine). 3'-phosphoadenylyl sulfate is bound by residues 144–150 (PKVACSN) and 202–210 (REPMARLLS). The N-linked (GlcNAc...) asparagine glycan is linked to Asn-359.

This sequence belongs to the sulfotransferase 2 family.

The protein resides in the golgi apparatus membrane. Its function is as follows. Catalyzes the transfer of sulfate to position 4 of the N-acetylgalactosamine (GalNAc) residue of dermatan sulfate. This Danio rerio (Zebrafish) protein is Carbohydrate sulfotransferase 14 (chst14).